A 207-amino-acid polypeptide reads, in one-letter code: Ribosomal RNA large subunit methyltransferase E (207 aa).

Residues glycine 60, tryptophan 62, aspartate 80, aspartate 96, and aspartate 121 each contribute to the S-adenosyl-L-methionine site. Lysine 161 functions as the Proton acceptor in the catalytic mechanism.

This sequence belongs to the class I-like SAM-binding methyltransferase superfamily. RNA methyltransferase RlmE family.

The protein localises to the cytoplasm. It carries out the reaction uridine(2552) in 23S rRNA + S-adenosyl-L-methionine = 2'-O-methyluridine(2552) in 23S rRNA + S-adenosyl-L-homocysteine + H(+). Functionally, specifically methylates the uridine in position 2552 of 23S rRNA at the 2'-O position of the ribose in the fully assembled 50S ribosomal subunit. This is Ribosomal RNA large subunit methyltransferase E from Methylobacillus flagellatus (strain ATCC 51484 / DSM 6875 / VKM B-1610 / KT).